Reading from the N-terminus, the 165-residue chain is Cysteine and tyrosine-rich protein 1 (165 aa).

Residues 1 to 29 (MDALRLPRRPGVLLPKLILLFVYAGDCLA) form the signal peptide. Over 30-61 (QCGKECHSYCCDGSTPYCCSYYAYIGNILSGT) the chain is Extracellular. The helical transmembrane segment at 62-82 (AIAGIVFGIVFIMGVIAGIAI) threads the bilayer. At 83 to 165 (CICMCMKNNR…SSSQNRIRDN (83 aa)) the chain is on the cytoplasmic side. The interval 125 to 165 (RTDLPPPYSAAPQASAQRSPPPPYPGNPRKYSSSQNRIRDN) is disordered. Polar residues predominate over residues 154–165 (KYSSSQNRIRDN).

It belongs to the CYYR1 family.

Its subcellular location is the membrane. The protein is Cysteine and tyrosine-rich protein 1 (Cyyr1) of Mus musculus (Mouse).